We begin with the raw amino-acid sequence, 40 residues long: Alpha-conotoxin-like Qc1.4b (40 aa).

A propeptide spanning residues 1-19 (SDGRNTAANDKASDLMALR) is cleaved from the precursor. Disulfide bonds link C22–C28 and C23–C36. The segment at 24–26 (PNP) is lacks the Ser-Xaa-Pro motif that is crucial for potent interaction with nAChR. Position 36 is a cysteine amide (C36). Residues 37-40 (GGGR) constitute a propeptide that is removed on maturation.

It belongs to the conotoxin A superfamily. In terms of tissue distribution, expressed by the venom duct.

The protein resides in the secreted. Alpha-conotoxins act on postsynaptic membranes, they bind to the nicotinic acetylcholine receptors (nAChR) and thus inhibit them. Has possibly a distinct nAChR binding mode from other alpha-conotoxins, due to a different three residue motif (lacks the Ser-Xaa-Pro motif). This Conus quercinus (Oak cone) protein is Alpha-conotoxin-like Qc1.4b.